The chain runs to 214 residues: Protein PsaE (214 aa).

An N-terminal signal peptide occupies residues 1-24; it reads MSHCVVLNKLESVLIIGDSRYALS. A DNA-binding region (ompR/PhoB-type) is located at residues 1–94; that stretch reads MSHCVVLNKL…YKNEGYSYQK (94 aa).

Functionally, required for expression of pH 6 antigen. This Yersinia pseudotuberculosis serotype I (strain IP32953) protein is Protein PsaE (psaE).